Reading from the N-terminus, the 235-residue chain is Retron Ec48 transmembrane protein (235 aa).

Helical transmembrane passes span 11-31 (IVGV…FETI) and 64-84 (AFGW…ALMT).

It is found in the cell inner membrane. Membrane component of antiviral defense system Retron Ec48, composed of a non-coding RNA (ncRNA), a reverse transcriptase (RT) and this membrane protein. Expression of this retron confers protection against bacteriophages lambda, T2, T4, T5 and T7. At multiplicity of infection (MOI) of 0.02 cultures grow normally when infected with lambda without collapsing, at MOI 2 cultures enter growth stasis. At MOI 3 cell membranes are permeabilized within 15 minutes of infection but do not lyse, suggesting the phage are not able to finish a replication cycle. Antiviral defense is suppressed by mutations that knockout the lambda gam expression or phage T7 gp5.9 expression; both viral genes inhibit host RecBCD. The Ec48 retron may sense the integrity of the RecBCD enzyme; when RecBCD is perturbed by viral proteins the Ec48 effector (the membrane protein) is activated, leading to abortive infection and bacterial growth arrest. This Escherichia coli protein is Retron Ec48 transmembrane protein.